The following is a 339-amino-acid chain: DNA-directed RNA polymerase subunit alpha (339 aa).

The tract at residues 1–233 is alpha N-terminal domain (alpha-NTD); it reads MVREEVAGST…DLFLPFLHAE (233 aa). An alpha C-terminal domain (alpha-CTD) region spans residues 264-339; the sequence is KKGIPLNCIF…IDLLKNKLSF (76 aa).

The protein belongs to the RNA polymerase alpha chain family. In terms of assembly, in plastids the minimal PEP RNA polymerase catalytic core is composed of four subunits: alpha, beta, beta', and beta''. When a (nuclear-encoded) sigma factor is associated with the core the holoenzyme is formed, which can initiate transcription.

Its subcellular location is the plastid. The protein localises to the chloroplast. The catalysed reaction is RNA(n) + a ribonucleoside 5'-triphosphate = RNA(n+1) + diphosphate. In terms of biological role, DNA-dependent RNA polymerase catalyzes the transcription of DNA into RNA using the four ribonucleoside triphosphates as substrates. The polypeptide is DNA-directed RNA polymerase subunit alpha (Heteranthelium piliferum (Elymus pilifer)).